Reading from the N-terminus, the 230-residue chain is Transmembrane ascorbate ferrireductase 2 (230 aa).

Helical transmembrane passes span 5–25 (VLGGFPIFMVVRVLGFIIAAL) and 50–70 (VHPVMMVIGLILFNGEAMLAY). The region spanning 14 to 218 (VVRVLGFIIA…LGGFVILGVV (205 aa)) is the Cytochrome b561 domain. H51 is a heme b binding site. L-ascorbate-binding residues include K77 and K81. A helical transmembrane segment spans residues 82-102 (LVHLTLQLTAFILSLIGVWAA). H84 contributes to the heme b binding site. 3 residues coordinate monodehydro-L-ascorbate radical: F105, H106, and Y115. H118 provides a ligand contact to heme b. A helical membrane pass occupies residues 120–140 (WLGLACLFLFAFQWAAGFVTY). L-ascorbate contacts are provided by Y140, R150, and A151. Residue H157 participates in heme b binding. The helical transmembrane segment at 157–177 (HVFLGISIYALALVTATTGIL) threads the bilayer. Residues F182 and N186 each contribute to the monodehydro-L-ascorbate radical site. The chain crosses the membrane as a helical span at residues 198–218 (LVNTMGVLILILGGFVILGVV).

Homodimer. Requires heme b as cofactor. As to expression, expressed in roots, seedlings, leaves and flowers. Expressed in the L1 layer of the shoot apex, in the epidermis of leaf primordia and young leaves and in vascular bundles. In the differentiation zone of the root, detected in the pericycle and in the epidermis, but not in the cortex. Strongly expressed in the cortical region of the root tip, in the meristematic tissue and in the epidermal cell layer of lateral roots, but not in the root caps. Highly expressed in unfertilized ovules. In mature embryos, expressed in the epidermis, cotyledon tips and root tips.

It localises to the membrane. It catalyses the reaction Fe(3+)(out) + L-ascorbate(in) = monodehydro-L-ascorbate radical(in) + Fe(2+)(out) + H(+). Its function is as follows. Two-heme-containing cytochrome. Catalyzes ascorbate-dependent transmembrane ferric-chelate reduction. The chain is Transmembrane ascorbate ferrireductase 2 (CYB561B) from Arabidopsis thaliana (Mouse-ear cress).